A 132-amino-acid chain; its full sequence is Riboflavin kinase (132 aa).

13–18 is a CDP binding site; the sequence is GLGHGS. Positions 40 and 42 each coordinate Mg(2+). 2 residues coordinate FMN: Thr-98 and Glu-106. Position 111–114 (111–114) interacts with CDP; that stretch reads VYLR.

It belongs to the archaeal riboflavin kinase family. Requires Mg(2+) as cofactor.

It catalyses the reaction riboflavin + CTP = CDP + FMN + H(+). The protein operates within cofactor biosynthesis; FMN biosynthesis; FMN from riboflavin (CTP route): step 1/1. Its function is as follows. Catalyzes the CTP-dependent phosphorylation of riboflavin (vitamin B2) to form flavin mononucleotide (FMN). The chain is Riboflavin kinase from Aeropyrum pernix (strain ATCC 700893 / DSM 11879 / JCM 9820 / NBRC 100138 / K1).